The sequence spans 548 residues: Membrane protein insertase YidC (548 aa).

Residues 6-26 (NLLVIALLFVSFMIWQAWEQD) form a helical membrane-spanning segment. Positions 28 to 55 (NPQPQAQQTTQTTTTAAGSAADQGVPAS) are disordered. Low complexity predominate over residues 30–50 (QPQAQQTTQTTTTAAGSAADQ). The next 4 helical transmembrane spans lie at 350-370 (FVGN…GIMY), 420-440 (LGGC…YYML), 458-478 (LSAQ…MFFI), and 499-519 (PVIF…YYIV).

The protein belongs to the OXA1/ALB3/YidC family. Type 1 subfamily. As to quaternary structure, interacts with the Sec translocase complex via SecD. Specifically interacts with transmembrane segments of nascent integral membrane proteins during membrane integration.

The protein localises to the cell inner membrane. Required for the insertion and/or proper folding and/or complex formation of integral membrane proteins into the membrane. Involved in integration of membrane proteins that insert both dependently and independently of the Sec translocase complex, as well as at least some lipoproteins. Aids folding of multispanning membrane proteins. The chain is Membrane protein insertase YidC from Shigella dysenteriae serotype 1 (strain Sd197).